The primary structure comprises 46 residues: Diuretic hormone class 1 (46 aa).

Residue isoleucine 46 is modified to Isoleucine amide.

The protein localises to the secreted. Its function is as follows. Regulation of fluid secretion. Stimulates primary urine secretion by Malpighian tubules and causes a dose-dependent stimulation of cAMP levels in the tubules. Has a greater effect on the transport of Na(+) then K(+) ions. In vitro, has synergistic effects with the smaller diuretic hormone DH(31) which co-occurs with it. The polypeptide is Diuretic hormone class 1 (Diploptera punctata (Pacific beetle cockroach)).